The sequence spans 79 residues: Small ribosomal subunit protein uS17 (79 aa).

This sequence belongs to the universal ribosomal protein uS17 family. In terms of assembly, part of the 30S ribosomal subunit.

In terms of biological role, one of the primary rRNA binding proteins, it binds specifically to the 5'-end of 16S ribosomal RNA. This Rhizobium rhizogenes (strain K84 / ATCC BAA-868) (Agrobacterium radiobacter) protein is Small ribosomal subunit protein uS17.